We begin with the raw amino-acid sequence, 312 residues long: uncharacterized protein (312 aa).

The N-terminal stretch at 1–28 (MNSADTQEPKSFNHTDMWTAFGTTMSGA) is a signal peptide.

The FAS-operon encodes genes involved in cytokinin production and in host plant fasciation (leafy gall). This is an uncharacterized protein from Rhodococcoides fascians (Rhodococcus fascians).